The primary structure comprises 632 residues: 1-deoxy-D-xylulose-5-phosphate synthase (632 aa).

Residues H79 and 120–122 (GHA) each bind thiamine diphosphate. D151 lines the Mg(2+) pocket. Thiamine diphosphate-binding positions include 152 to 153 (GS), N180, F292, and E376. A Mg(2+)-binding site is contributed by N180.

Belongs to the transketolase family. DXPS subfamily. Homodimer. Requires Mg(2+) as cofactor. Thiamine diphosphate is required as a cofactor.

The enzyme catalyses D-glyceraldehyde 3-phosphate + pyruvate + H(+) = 1-deoxy-D-xylulose 5-phosphate + CO2. The protein operates within metabolic intermediate biosynthesis; 1-deoxy-D-xylulose 5-phosphate biosynthesis; 1-deoxy-D-xylulose 5-phosphate from D-glyceraldehyde 3-phosphate and pyruvate: step 1/1. Functionally, catalyzes the acyloin condensation reaction between C atoms 2 and 3 of pyruvate and glyceraldehyde 3-phosphate to yield 1-deoxy-D-xylulose-5-phosphate (DXP). In Azobacteroides pseudotrichonymphae genomovar. CFP2, this protein is 1-deoxy-D-xylulose-5-phosphate synthase.